We begin with the raw amino-acid sequence, 282 residues long: NADPH-dependent 7-cyano-7-deazaguanine reductase (282 aa).

90–92 (IES) is a binding site for substrate. Residue 92–93 (SK) participates in NADPH binding. Cysteine 190 functions as the Thioimide intermediate in the catalytic mechanism. Residue aspartate 197 is the Proton donor of the active site. Residue 229-230 (HE) participates in substrate binding. An NADPH-binding site is contributed by 258–259 (RG).

This sequence belongs to the GTP cyclohydrolase I family. QueF type 2 subfamily. Homodimer.

It localises to the cytoplasm. The enzyme catalyses 7-aminomethyl-7-carbaguanine + 2 NADP(+) = 7-cyano-7-deazaguanine + 2 NADPH + 3 H(+). Its pathway is tRNA modification; tRNA-queuosine biosynthesis. In terms of biological role, catalyzes the NADPH-dependent reduction of 7-cyano-7-deazaguanine (preQ0) to 7-aminomethyl-7-deazaguanine (preQ1). This is NADPH-dependent 7-cyano-7-deazaguanine reductase from Aeromonas salmonicida (strain A449).